Here is a 252-residue protein sequence, read N- to C-terminus: MILSAAVDNGQPGYPWLVFLHGFSGDRNEWRKVGDAFPAWPRLYLDLPGHGGSADIAVQDFAGVNTLLQSTLNSYNIHKYWLIGYSLGGRVAMNFASQPRAGMRGLIVEGGHPGLQDAEARQARRSNDSAWAERFRREPLEQVFADWYQQPVFASLNAAQRESLVALRSRNNGATLAAMLQATSLAAQADLRASLQARDFPFHYLCGERDAKFRAIAQTLAADLHLIHHAGHNAHRDNPAAVIACLAQILAS.

This sequence belongs to the AB hydrolase superfamily. MenH family. As to quaternary structure, monomer.

The catalysed reaction is 5-enolpyruvoyl-6-hydroxy-2-succinyl-cyclohex-3-ene-1-carboxylate = (1R,6R)-6-hydroxy-2-succinyl-cyclohexa-2,4-diene-1-carboxylate + pyruvate. The protein operates within quinol/quinone metabolism; 1,4-dihydroxy-2-naphthoate biosynthesis; 1,4-dihydroxy-2-naphthoate from chorismate: step 3/7. Its pathway is quinol/quinone metabolism; menaquinone biosynthesis. In terms of biological role, catalyzes a proton abstraction reaction that results in 2,5-elimination of pyruvate from 2-succinyl-5-enolpyruvyl-6-hydroxy-3-cyclohexene-1-carboxylate (SEPHCHC) and the formation of 2-succinyl-6-hydroxy-2,4-cyclohexadiene-1-carboxylate (SHCHC). The protein is 2-succinyl-6-hydroxy-2,4-cyclohexadiene-1-carboxylate synthase of Klebsiella pneumoniae subsp. pneumoniae (strain ATCC 700721 / MGH 78578).